A 204-amino-acid polypeptide reads, in one-letter code: NAD(P)H-quinone oxidoreductase subunit M, chloroplastic (204 aa).

A chloroplast-targeting transit peptide spans 1 to 27 (MASTSMSLTRACKVHAVLACSIPSVSS).

Belongs to the NDH complex subunit M family. Part of the chloroplast NDH complex, composed of a mixture of chloroplast and nucleus encoded subunits. Component of the NDH subcomplex A, at least composed of ndhH, ndhI, ndhJ, ndhK, ndhL, ndhM, ndhN and ndhO.

The protein resides in the plastid. It localises to the chloroplast thylakoid membrane. The catalysed reaction is a plastoquinone + NADH + (n+1) H(+)(in) = a plastoquinol + NAD(+) + n H(+)(out). It catalyses the reaction a plastoquinone + NADPH + (n+1) H(+)(in) = a plastoquinol + NADP(+) + n H(+)(out). Functionally, NDH shuttles electrons from NAD(P)H:plastoquinone, via FMN and iron-sulfur (Fe-S) centers, to quinones in the photosynthetic chain and possibly in a chloroplast respiratory chain. The immediate electron acceptor for the enzyme in this species is believed to be plastoquinone. Couples the redox reaction to proton translocation, and thus conserves the redox energy in a proton gradient. In Physcomitrium patens (Spreading-leaved earth moss), this protein is NAD(P)H-quinone oxidoreductase subunit M, chloroplastic.